The following is a 557-amino-acid chain: MPKEKYEPPDPRRMYTIMSSEEAANGKKSHWAELEISGKVRSLSSSLWSLTHLTALHLSDNSLSCIPSDIAKLHNLVYLDLSHNQIQSLPAELGNMVSLRELHLNYNQLRVLPFELGKLFQLQTLSLKGNPLTQDILNLCLEPDGTRRLLNYLLDNLSGTAKRISTEQPPPRSWIMLQEPDRTRPTALFSVMCYNVLCDKYATRQLYGYCPSWALNWDYRKKAIIQEILSCNADIISLQEVETEQYYSFFLVELKERGYNGFFSPKSRARTMSEQERKHVDGCAIFFKTEKFTLVQKHTVEFNQLAMANSEGSEAMLNRVMTKDNIGVAVLLELRKELIEMSSGKPHLGTEKQLILVANAHMHWDPEYSDVKLVQTMMFLSEVKNIIDKASRSLKSSVLGECGTIPLVLCADLNSLPDSGVVEYLSTGGVETNHKDFKELRYNESLTNFSCNGKNGMTNGRITHGFKLKSAYENGLMPYTNYTFDFKGIIDYIFYSKPQLNTLAILGPLDHHWLVENNISGCPHPLIPSDHFSLFAQLELLLPFLPQVNGIHLPGRR.

4 LRR repeats span residues His52 to Leu73, Asn75 to Met96, Ser98 to Phe120, and Gln121 to Pro143. A nuclease domain region spans residues Leu153 to Arg557. Glu240 contacts Mg(2+). Residues Glu240, Glu276, His361, and Pro366 each contribute to the substrate site. Asp412 is a binding site for Mg(2+). The active-site Proton donor/acceptor is the Asp412. Residues Asn414, Asn481, and Phe486 each contribute to the substrate site.

The protein belongs to the CCR4/nocturin family. As to quaternary structure, component of the CCR4-NOT complex; distinct complexes seem to exist that differ in the participation of probably mutually exclusive catalytic subunits; the complex contains two deadenylase subunits, CNOT6 or CNOT6L, and CNOT7 or CNOT8. Interacts with CNOT7 and CNOT8. Interacts with UNR. Interacts with ZFP36L1 (via N-terminus). Interacts with ZNF335. Mg(2+) serves as cofactor.

The protein localises to the cytoplasm. It localises to the nucleus. The enzyme catalyses Exonucleolytic cleavage of poly(A) to 5'-AMP.. In terms of biological role, poly(A) nuclease with 3'-5' RNase activity. Catalytic component of the CCR4-NOT complex which is one of the major cellular mRNA deadenylases and is linked to various cellular processes including bulk mRNA degradation, miRNA-mediated repression, translational repression during translational initiation and general transcription regulation. Additional complex functions may be a consequence of its influence on mRNA expression. Involved in mRNA decay mediated by the major-protein-coding determinant of instability (mCRD) of the FOS gene in the cytoplasm. In the presence of ZNF335, enhances ligand-dependent transcriptional activity of nuclear hormone receptors. Mediates cell proliferation and cell survival and prevents cellular senescence. In Mus musculus (Mouse), this protein is CCR4-NOT transcription complex subunit 6 (Cnot6).